A 283-amino-acid chain; its full sequence is Pantothenate synthetase (283 aa).

ATP is bound at residue 26 to 33 (MGNLHEGH). His33 (proton donor) is an active-site residue. Gln57 serves as a coordination point for (R)-pantoate. A beta-alanine-binding site is contributed by Gln57. 144 to 147 (GKKD) provides a ligand contact to ATP. (R)-pantoate is bound at residue Gln150. 181–184 (LSSR) serves as a coordination point for ATP.

Belongs to the pantothenate synthetase family. As to quaternary structure, homodimer.

It localises to the cytoplasm. The catalysed reaction is (R)-pantoate + beta-alanine + ATP = (R)-pantothenate + AMP + diphosphate + H(+). The protein operates within cofactor biosynthesis; (R)-pantothenate biosynthesis; (R)-pantothenate from (R)-pantoate and beta-alanine: step 1/1. In terms of biological role, catalyzes the condensation of pantoate with beta-alanine in an ATP-dependent reaction via a pantoyl-adenylate intermediate. In Variovorax paradoxus (strain S110), this protein is Pantothenate synthetase.